Consider the following 301-residue polypeptide: Ornithine carbamoyltransferase (301 aa).

Residues 53-56 (STRT), Q80, R104, and 131-134 (HPCQ) each bind carbamoyl phosphate. Residues N162, D221, and 225–226 (SI) each bind L-ornithine. Carbamoyl phosphate contacts are provided by residues 260–261 (CL) and R288.

This sequence belongs to the aspartate/ornithine carbamoyltransferase superfamily. OTCase family.

The protein localises to the cytoplasm. It carries out the reaction carbamoyl phosphate + L-ornithine = L-citrulline + phosphate + H(+). It participates in amino-acid biosynthesis; L-arginine biosynthesis; L-arginine from L-ornithine and carbamoyl phosphate: step 1/3. Reversibly catalyzes the transfer of the carbamoyl group from carbamoyl phosphate (CP) to the N(epsilon) atom of ornithine (ORN) to produce L-citrulline. This Cenarchaeum symbiosum (strain A) protein is Ornithine carbamoyltransferase.